Here is a 507-residue protein sequence, read N- to C-terminus: Glutamyl-tRNA(Gln) amidotransferase subunit A, mitochondrial (507 aa).

Catalysis depends on charge relay system residues K79 and S160. S184 acts as the Acyl-ester intermediate in catalysis.

Belongs to the amidase family. GatA subfamily. As to quaternary structure, subunit of the heterotrimeric GatCAB amidotransferase (AdT) complex, composed of A, B and C subunits.

It localises to the mitochondrion. It catalyses the reaction L-glutamyl-tRNA(Gln) + L-glutamine + ATP + H2O = L-glutaminyl-tRNA(Gln) + L-glutamate + ADP + phosphate + H(+). Its function is as follows. Allows the formation of correctly charged Gln-tRNA(Gln) through the transamidation of misacylated Glu-tRNA(Gln) in the mitochondria. The reaction takes place in the presence of glutamine and ATP through an activated gamma-phospho-Glu-tRNA(Gln). In Drosophila pseudoobscura pseudoobscura (Fruit fly), this protein is Glutamyl-tRNA(Gln) amidotransferase subunit A, mitochondrial.